Here is a 66-residue protein sequence, read N- to C-terminus: Large ribosomal subunit protein uL29 (66 aa).

This sequence belongs to the universal ribosomal protein uL29 family.

This is Large ribosomal subunit protein uL29 from Bartonella henselae (strain ATCC 49882 / DSM 28221 / CCUG 30454 / Houston 1) (Rochalimaea henselae).